The sequence spans 325 residues: Beta-ketoacyl-[acyl-carrier-protein] synthase III (325 aa).

Active-site residues include C113 and H250. Residues 251–255 are ACP-binding; sequence QANIR. The active site involves N280.

It belongs to the thiolase-like superfamily. FabH family. As to quaternary structure, homodimer.

The protein localises to the cytoplasm. The enzyme catalyses malonyl-[ACP] + acetyl-CoA + H(+) = 3-oxobutanoyl-[ACP] + CO2 + CoA. Its pathway is lipid metabolism; fatty acid biosynthesis. Its function is as follows. Catalyzes the condensation reaction of fatty acid synthesis by the addition to an acyl acceptor of two carbons from malonyl-ACP. Catalyzes the first condensation reaction which initiates fatty acid synthesis and may therefore play a role in governing the total rate of fatty acid production. Possesses both acetoacetyl-ACP synthase and acetyl transacylase activities. Its substrate specificity determines the biosynthesis of branched-chain and/or straight-chain of fatty acids. The protein is Beta-ketoacyl-[acyl-carrier-protein] synthase III of Streptococcus suis (strain 98HAH33).